The sequence spans 213 residues: Nucleolar protein 12 (213 aa).

A coiled-coil region spans residues 32 to 95; the sequence is GFHKRKVERK…RLVTAKTESV (64 aa). A disordered region spans residues 117-213; it reads ARLLGLPTPE…LTGKARHSGE (97 aa). Basic residues-rich tracts occupy residues 169 to 181 and 197 to 213; these read AHSR…KRLR and SKTR…HSGE.

It belongs to the RRP17 family. In terms of assembly, interacts with KIAA1191.

The protein localises to the nucleus. It is found in the nucleolus. Its subcellular location is the cytoplasm. Multifunctional RNA binding protein that plays a role in RNA metabolism and DNA maintenance. Participates in the resolution of DNA stress and the maintenance of genome integrity by localizing to sites of DNA insults. Also plays a role in proper nucleolar organization by limiting nucleolar size and regulating nucleolar number. Mechanistically, regulates the nucleolar levels of fibrillarin and nucleolin, two key players in pre-rRNA processing and ribosome assembly. The sequence is that of Nucleolar protein 12 (NOL12) from Bos taurus (Bovine).